Reading from the N-terminus, the 250-residue chain is Triosephosphate isomerase (250 aa).

9-11 (NWK) contributes to the substrate binding site. The active-site Electrophile is the His-95. Glu-167 acts as the Proton acceptor in catalysis. Substrate contacts are provided by residues Gly-173, Ser-213, and 234–235 (GG).

The protein belongs to the triosephosphate isomerase family. As to quaternary structure, homodimer.

Its subcellular location is the cytoplasm. The catalysed reaction is D-glyceraldehyde 3-phosphate = dihydroxyacetone phosphate. The protein operates within carbohydrate biosynthesis; gluconeogenesis. It functions in the pathway carbohydrate degradation; glycolysis; D-glyceraldehyde 3-phosphate from glycerone phosphate: step 1/1. Involved in the gluconeogenesis. Catalyzes stereospecifically the conversion of dihydroxyacetone phosphate (DHAP) to D-glyceraldehyde-3-phosphate (G3P). The chain is Triosephosphate isomerase from Exiguobacterium sibiricum (strain DSM 17290 / CCUG 55495 / CIP 109462 / JCM 13490 / 255-15).